A 416-amino-acid polypeptide reads, in one-letter code: Enterobactin exporter EntS (416 aa).

The Cytoplasmic segment spans residues Met1 to Ala21. The chain crosses the membrane as a helical span at residues Val22–Val42. Over Gln43–Gly55 the chain is Periplasmic. The chain crosses the membrane as a helical span at residues Leu56–Ala76. At Asp77 to Lys83 the chain is on the cytoplasmic side. Residues Val84–Leu104 traverse the membrane as a helical segment. The Periplasmic segment spans residues Leu105–Ser109. The helical transmembrane segment at Leu110–Ala130 threads the bilayer. Residues Leu131–Arg156 are Cytoplasmic-facing. The helical transmembrane segment at Leu157–Trp177 threads the bilayer. A topological domain (periplasmic) is located at residue Asn178. Residues Tyr179–Leu199 traverse the membrane as a helical segment. Residues Pro200–Arg218 lie on the Cytoplasmic side of the membrane. The helical transmembrane segment at Phe219–Ala239 threads the bilayer. Over Ser240–Ser256 the chain is Periplasmic. The helical transmembrane segment at Ala257 to Thr277 threads the bilayer. Over Ser278–Pro287 the chain is Cytoplasmic. The chain crosses the membrane as a helical span at residues Gly288–Leu307. At Met308–Leu313 the chain is on the periplasmic side. Residues Gly314–Leu336 form a helical membrane-spanning segment. Residues Gln337 to Asn356 are Cytoplasmic-facing. A helical transmembrane segment spans residues Val357–Val377. A topological domain (periplasmic) is located at residue Ala378. A helical membrane pass occupies residues Ser379–Val399. Residues Glu400–Ser416 are Cytoplasmic-facing.

Belongs to the major facilitator superfamily. EntS (TC 2.A.1.38) family.

The protein resides in the cell inner membrane. Component of an export pathway for enterobactin. In Escherichia coli O81 (strain ED1a), this protein is Enterobactin exporter EntS.